The primary structure comprises 213 residues: Uracil phosphoribosyltransferase (213 aa).

Residues arginine 78, arginine 103, and 131–139 each bind 5-phospho-alpha-D-ribose 1-diphosphate; that span reads DPMLATGGT. Uracil is bound by residues isoleucine 197 and 202-204; that span reads GDA. Aspartate 203 is a binding site for 5-phospho-alpha-D-ribose 1-diphosphate.

Belongs to the UPRTase family. Mg(2+) is required as a cofactor.

The enzyme catalyses UMP + diphosphate = 5-phospho-alpha-D-ribose 1-diphosphate + uracil. The protein operates within pyrimidine metabolism; UMP biosynthesis via salvage pathway; UMP from uracil: step 1/1. Allosterically activated by GTP. In terms of biological role, catalyzes the conversion of uracil and 5-phospho-alpha-D-ribose 1-diphosphate (PRPP) to UMP and diphosphate. This Bifidobacterium longum (strain DJO10A) protein is Uracil phosphoribosyltransferase.